The chain runs to 261 residues: Endomucin (261 aa).

An N-terminal signal peptide occupies residues 1-18 (MELLQVTILFLLPSICSS). N-linked (GlcNAc...) asparagine glycans are attached at residues asparagine 19, asparagine 28, asparagine 98, and asparagine 104. The Extracellular portion of the chain corresponds to 19 to 190 (NSTGVLEAAN…TSATSRSYSS (172 aa)). Polar residues-rich tracts occupy residues 118-134 (TLQS…SIKT) and 146-171 (ASPS…SQVI). The interval 118 to 183 (TLQSSKPKTE…EGGKNASTSA (66 aa)) is disordered. Residues asparagine 164 and asparagine 178 are each glycosylated (N-linked (GlcNAc...) asparagine). A helical membrane pass occupies residues 191–211 (IILPVVIALIVITLSVFVLVG). Residues 212-261 (LYRMCWKADPGTPENGNDQPQSDKESVKLLTVKTISHESGEHSAQGKTKN) lie on the Cytoplasmic side of the membrane. Serine 237 carries the post-translational modification Phosphoserine.

Highly O-glycosylated. Sialic acid-rich glycoprotein. Expressed in heart, kidney and lung.

It is found in the cell membrane. It localises to the membrane. The protein resides in the secreted. Functionally, endothelial sialomucin, also called endomucin or mucin-like sialoglycoprotein, which interferes with the assembly of focal adhesion complexes and inhibits interaction between cells and the extracellular matrix. The protein is Endomucin (EMCN) of Homo sapiens (Human).